Here is a 166-residue protein sequence, read N- to C-terminus: Small ribosomal subunit protein uS5 (166 aa).

The region spanning 11–74 (LQEKLVQVNR…DQARRNMVKV (64 aa)) is the S5 DRBM domain.

Belongs to the universal ribosomal protein uS5 family. As to quaternary structure, part of the 30S ribosomal subunit. Contacts proteins S4 and S8.

With S4 and S12 plays an important role in translational accuracy. Its function is as follows. Located at the back of the 30S subunit body where it stabilizes the conformation of the head with respect to the body. This chain is Small ribosomal subunit protein uS5, found in Chromohalobacter salexigens (strain ATCC BAA-138 / DSM 3043 / CIP 106854 / NCIMB 13768 / 1H11).